The following is a 1044-amino-acid chain: Integrin alpha-V (1044 aa).

Positions 1 to 30 (MAAPGRLLLRPRPGGLLLLLPGLLLPLADA) are cleaved as a signal peptide. Residues 31–988 (FNLDVESPAE…WGIQPAPMPV (958 aa)) are Extracellular-facing. FG-GAP repeat units lie at residues 32–98 (NLDV…RRCQ), 109–170 (DYAK…VEYA), 173–225 (RSKN…ISKY), 237–291 (QLAT…GKNM), 292–357 (SSLH…GDFQ), 358–415 (TTKL…GLNS), and 419–482 (QILE…VYPS). A glycan (N-linked (GlcNAc...) asparagine) is linked at N74. Cystine bridges form between C89-C97, C138-C158, and C172-C185. Ca(2+) is bound by residues D260, N262, D264, I266, and D268. N-linked (GlcNAc...) asparagine glycans are attached at residues N290 and N296. Ca(2+) is bound by residues D314, N316, D318, Y320, D322, D379, D381, D383, F385, D387, D443, D445, N447, Y449, and D451. Cystine bridges form between C491–C502 and C508–C565. The N-linked (GlcNAc...) asparagine glycan is linked to N615. 2 disulfides stabilise this stretch: C626–C632 and C698–C711. N-linked (GlcNAc...) asparagine glycosylation is found at N704, N835, N851, and N869. Disulfide bonds link C852–C910 and C900–C905. N-linked (GlcNAc...) asparagine glycans are attached at residues N941, N969, and N976. A helical membrane pass occupies residues 989 to 1012 (PVWVIILAVLAGLLLLAVLVFVMY). Over 1013-1044 (RMGFFKRVRPPQEEQEREQLQPHENGEGNSET) the chain is Cytoplasmic. The GFFKR motif signature appears at 1015–1019 (GFFKR). Over residues 1023–1038 (PQEEQEREQLQPHENG) the composition is skewed to basic and acidic residues. The interval 1023–1044 (PQEEQEREQLQPHENGEGNSET) is disordered.

Belongs to the integrin alpha chain family. As to quaternary structure, heterodimer of an alpha and a beta subunit. The alpha subunit is composed of a heavy and a light chain linked by a disulfide bond. Alpha-V (ITGAV) associates with either beta-1 (ITGB1), beta-3 (ITGB3), beta-5 (ITGB5), beta-6 (ITGB6) or beta-8 (ITGB8). Interacts with RAB25. Interacts with CIB1. Integrins ITGAV:ITGB3 and ITGAV:ITGB5 interact with FBLN5 (via N-terminus). ITGAV:ITGB3 and ITGAV:ITGB5 interact with CCN3. ITGAV:ITGB3 interacts with ADGRA2. ITGAV:ITGB3 interacts with FGF2; it is likely that FGF2 can simultaneously bind ITGAV:ITGB3 and FGF receptors. ITGAV:ITGB3 interacts with SELP (via C-type lectin domain); the interaction mediates cell-cell interaction and adhesion. ITGAV:ITGB3 is found in a ternary complex with CX3CR1 and CX3CL1. ITGAV:ITGB3 is found in a ternary complex with NRG1 and ERBB3. ITGAV:ITGB3 is found in a ternary complex with FGF1 and FGFR1. ITGAV:ITGB3 is found in a ternary complex with IGF1 and IGF1R. ITGAV:ITGB3 interacts with IGF2. ITGAV:ITGB3 and ITGAV:ITGB6 interact with FBN1. ITGAV:ITGB3 interacts with CD9, CD81 and CD151 (via second extracellular domain). ITGAV:ITGB6 interacts with TGFB1. ITGAV:ITGB3 interacts with PTN. Forms a complex with PTPRZ1 and PTN that stimulates endothelial cell migration through ITGB3 'Tyr-773' phosphorylation. Interacts with TM4SF19.

Its subcellular location is the cell membrane. It is found in the cell junction. The protein localises to the focal adhesion. In terms of biological role, the alpha-V (ITGAV) integrins are receptors for vitronectin, cytotactin, fibronectin, fibrinogen, laminin, matrix metalloproteinase-2, osteopontin, osteomodulin, prothrombin, thrombospondin, TGFB1 and vWF. They recognize the sequence R-G-D in a wide array of ligands. Alpha-V integrins may play a role in embryo implantation, angiogenesis and wound healing. ITGAV:ITGB3 binds to fractalkine (CX3CL1) and may act as its coreceptor in CX3CR1-dependent fractalkine signaling. ITGAV:ITGB3 binds to NRG1 (via EGF domain) and this binding is essential for NRG1-ERBB signaling. ITGAV:ITGB3 binds to FGF1 and this binding is essential for FGF1 signaling. ITGAV:ITGB3 binds to FGF2 and this binding is essential for FGF2 signaling. ITGAV:ITGB3 binds to IGF1 and this binding is essential for IGF1 signaling. ITGAV:ITGB3 binds to IGF2 and this binding is essential for IGF2 signaling. ITGAV:ITGB3 binds to IL1B and this binding is essential for IL1B signaling. ITGAV:ITGB3 binds to PLA2G2A via a site (site 2) which is distinct from the classical ligand-binding site (site 1) and this induces integrin conformational changes and enhanced ligand binding to site 1. ITGAV:ITGB3 and ITGAV:ITGB6 act as a receptor for fibrillin-1 (FBN1) and mediate R-G-D-dependent cell adhesion to FBN1. Integrin alpha-V/beta-6 or alpha-V/beta-8 (ITGAV:ITGB6 or ITGAV:ITGB8) mediates R-G-D-dependent release of transforming growth factor beta-1 (TGF-beta-1) from regulatory Latency-associated peptide (LAP), thereby playing a key role in TGF-beta-1 activation. ITGAV:ITGB3 acts as a receptor for CD40LG. ITGAV:ITGB3 binds to the Lilrb4a/Gp49b receptor and enhances the Lilrb4a-mediated inhibition of mast cell activation. ITGAV:ITGB3 also suppresses marginal zone B cell antibody production through its interaction with Lilrb4a. ITGAV:ITGB3 acts as a receptor for IBSP and promotes cell adhesion and migration to IBSP. In Mus musculus (Mouse), this protein is Integrin alpha-V (Itgav).